The primary structure comprises 492 residues: Catalase-1/2 (492 aa).

Active-site residues include histidine 65 and asparagine 138. Tyrosine 348 lines the heme pocket.

Belongs to the catalase family. As to quaternary structure, homotetramer. Requires heme as cofactor.

The protein localises to the cytoplasm. Its subcellular location is the cytosol. It is found in the peroxisome matrix. The enzyme catalyses 2 H2O2 = O2 + 2 H2O. Its function is as follows. Catalyzes the degradation of hydrogen peroxide (H(2)O(2)) generated by peroxisomal oxidases to water and oxygen, thereby protecting cells from the toxic effects of hydrogen peroxide. This Glycine max (Soybean) protein is Catalase-1/2 (CAT1).